Consider the following 406-residue polypeptide: Elongation factor Tu-B (406 aa).

A tr-type G domain is found at 10–215 (KPHVNVGTIG…AIDEYIPTPV (206 aa)). The tract at residues 19-26 (GHVDHGKT) is G1. Residue 19–26 (GHVDHGKT) participates in GTP binding. Threonine 26 contributes to the Mg(2+) binding site. The tract at residues 61–65 (GITIN) is G2. The tract at residues 82 to 85 (DCPG) is G3. GTP is bound by residues 82–86 (DCPGH) and 137–140 (NKVD). Positions 137 to 140 (NKVD) are G4. The tract at residues 175-177 (SAL) is G5. Threonine 395 carries the phosphothreonine modification.

The protein belongs to the TRAFAC class translation factor GTPase superfamily. Classic translation factor GTPase family. EF-Tu/EF-1A subfamily. As to quaternary structure, monomer. Phosphorylated on a threonine.

Its subcellular location is the cytoplasm. The catalysed reaction is GTP + H2O = GDP + phosphate + H(+). In terms of biological role, GTP hydrolase that promotes the GTP-dependent binding of aminoacyl-tRNA to the A-site of ribosomes during protein biosynthesis. Functionally, protects glycyl-tRNA(Gly) from hydrolysis by E.coli D-aminoacyl-tRNA deacylase (dtd). The sequence is that of Elongation factor Tu-B from Thermus thermophilus (strain ATCC 27634 / DSM 579 / HB8).